The following is a 176-amino-acid chain: ATP-dependent protease subunit HslV (176 aa).

T2 is an active-site residue. The Na(+) site is built by G157, C160, and T163.

Belongs to the peptidase T1B family. HslV subfamily. As to quaternary structure, a double ring-shaped homohexamer of HslV is capped on each side by a ring-shaped HslU homohexamer. The assembly of the HslU/HslV complex is dependent on binding of ATP.

Its subcellular location is the cytoplasm. The catalysed reaction is ATP-dependent cleavage of peptide bonds with broad specificity.. Allosterically activated by HslU binding. Its function is as follows. Protease subunit of a proteasome-like degradation complex believed to be a general protein degrading machinery. The chain is ATP-dependent protease subunit HslV from Enterobacter sp. (strain 638).